The following is a 315-amino-acid chain: Methionyl-tRNA formyltransferase (315 aa).

113–116 (SLLP) contacts (6S)-5,6,7,8-tetrahydrofolate.

Belongs to the Fmt family.

It catalyses the reaction L-methionyl-tRNA(fMet) + (6R)-10-formyltetrahydrofolate = N-formyl-L-methionyl-tRNA(fMet) + (6S)-5,6,7,8-tetrahydrofolate + H(+). Functionally, attaches a formyl group to the free amino group of methionyl-tRNA(fMet). The formyl group appears to play a dual role in the initiator identity of N-formylmethionyl-tRNA by promoting its recognition by IF2 and preventing the misappropriation of this tRNA by the elongation apparatus. The polypeptide is Methionyl-tRNA formyltransferase (Photorhabdus laumondii subsp. laumondii (strain DSM 15139 / CIP 105565 / TT01) (Photorhabdus luminescens subsp. laumondii)).